The sequence spans 409 residues: Bone morphogenetic protein 4 (409 aa).

The signal sequence occupies residues 1-24; it reads MIPGNRMLMVVLLCQVLLGGASHA. The propeptide occupies 25–293; sequence SLIPETGKKK…ALTRRRRAKR (269 aa). Phosphoserine is present on S91. 2 N-linked (GlcNAc...) asparagine glycosylation sites follow: N144 and N209. The interval 284 to 308 is disordered; that stretch reads ALTRRRRAKRSPKHHPQRARKKNKN. 3 disulfides stabilise this stretch: C309/C374, C338/C406, and C342/C408. N351 and N366 each carry an N-linked (GlcNAc...) asparagine glycan.

This sequence belongs to the TGF-beta family. As to quaternary structure, homodimer; disulfide-linked. Interacts with GREM2. Part of a complex consisting of TWSG1 and CHRD. Interacts with the serine proteases, HTRA1 and HTRA3; the interaction with either inhibits BMP4-mediated signaling. The HTRA protease activity is required for this inhibition. Interacts with SOSTDC1. Interacts with FBN1 (via N-terminal domain) and FBN2. Interacts with type I receptor BMPR1A. Interacts with type II receptor BMPR2. Interacts with FSTL1; this interaction inhibits the activation of the BMP4/Smad1/5/8 signaling pathway. Interacts with SCUBE3. Interacts with TGFBR3.

It is found in the secreted. The protein resides in the extracellular space. The protein localises to the extracellular matrix. Functionally, growth factor of the TGF-beta superfamily that plays essential roles in many developmental processes, including neurogenesis, vascular development, angiogenesis and osteogenesis. Acts in concert with PTHLH/PTHRP to stimulate ductal outgrowth during embryonic mammary development and to inhibit hair follicle induction. Initiates the canonical BMP signaling cascade by associating with type I receptor BMPR1A and type II receptor BMPR2. Once all three components are bound together in a complex at the cell surface, BMPR2 phosphorylates and activates BMPR1A. In turn, BMPR1A propagates signal by phosphorylating SMAD1/5/8 that travel to the nucleus and act as activators and repressors of transcription of target genes. Positively regulates the expression of odontogenic development regulator MSX1 via inducing the IPO7-mediated import of SMAD1 to the nucleus. Required for MSX1-mediated mesenchymal molar tooth bud development beyond the bud stage, via promoting Wnt signaling. Acts as a positive regulator of odontoblast differentiation during mesenchymal tooth germ formation, expression is repressed during the bell stage by MSX1-mediated inhibition of CTNNB1 signaling. Able to induce its own expression in dental mesenchymal cells and also in the neighboring dental epithelial cells via an MSX1-mediated pathway. Can also signal through non-canonical BMP pathways such as ERK/MAP kinase, PI3K/Akt, or SRC cascades. For example, induces SRC phosphorylation which, in turn, activates VEGFR2, leading to an angiogenic response. The chain is Bone morphogenetic protein 4 from Bos taurus (Bovine).